The primary structure comprises 389 residues: Dirigent protein 25 (389 aa).

The signal sequence occupies residues 1–21 (MAGCKVLFFLILALAITFVSA). Low complexity-rich tracts occupy residues 50–68 (GPFPTANSGPATGIASGTG), 77–86 (LGTNTGPGPL), and 98–135 (SSGTLPVTGPGPLPTSSGLLPGASSGNLPGSGSGPLPT). Residues 50 to 135 (GPFPTANSGP…PGSGSGPLPT (86 aa)) are disordered.

Belongs to the plant dirigent protein family. Homodimer.

It is found in the secreted. The protein resides in the extracellular space. It localises to the apoplast. In terms of biological role, dirigent proteins impart stereoselectivity on the phenoxy radical-coupling reaction, yielding optically active lignans from two molecules of coniferyl alcohol in the biosynthesis of lignans, flavonolignans, and alkaloids and thus plays a central role in plant secondary metabolism. The sequence is that of Dirigent protein 25 (DIR25) from Arabidopsis thaliana (Mouse-ear cress).